The primary structure comprises 251 residues: 5'-nucleotidase SurE (251 aa).

D8, D9, S40, and N95 together coordinate a divalent metal cation.

This sequence belongs to the SurE nucleotidase family. A divalent metal cation is required as a cofactor.

It is found in the cytoplasm. It carries out the reaction a ribonucleoside 5'-phosphate + H2O = a ribonucleoside + phosphate. In terms of biological role, nucleotidase that shows phosphatase activity on nucleoside 5'-monophosphates. This chain is 5'-nucleotidase SurE, found in Desulfitobacterium hafniense (strain DSM 10664 / DCB-2).